Consider the following 226-residue polypeptide: Cytochrome c oxidase subunit 2 (226 aa).

Residues 1 to 25 are Mitochondrial intermembrane-facing; it reads MNTWLLSLQNSNSPTYDMMIFFHDF. A helical transmembrane segment spans residues 26-47; the sequence is TMMILIFITLLILFIMFTMINN. Topologically, residues 48–61 are mitochondrial matrix; that stretch reads NLINRFLLQGHFIE. A helical membrane pass occupies residues 62 to 81; sequence LIWTITPMIILILIAIPSFK. Residues 82-226 are Mitochondrial intermembrane-facing; sequence ILYLTDEMFN…YFKNWLKSFL (145 aa). Cu cation-binding residues include histidine 160, cysteine 195, glutamate 197, cysteine 199, histidine 203, and methionine 206. Glutamate 197 lines the Mg(2+) pocket.

Belongs to the cytochrome c oxidase subunit 2 family. Component of the cytochrome c oxidase (complex IV, CIV), a multisubunit enzyme composed of a catalytic core of 3 subunits and several supernumerary subunits. The complex exists as a monomer or a dimer and forms supercomplexes (SCs) in the inner mitochondrial membrane with ubiquinol-cytochrome c oxidoreductase (cytochrome b-c1 complex, complex III, CIII). The cofactor is Cu cation.

It localises to the mitochondrion inner membrane. It carries out the reaction 4 Fe(II)-[cytochrome c] + O2 + 8 H(+)(in) = 4 Fe(III)-[cytochrome c] + 2 H2O + 4 H(+)(out). Component of the cytochrome c oxidase, the last enzyme in the mitochondrial electron transport chain which drives oxidative phosphorylation. The respiratory chain contains 3 multisubunit complexes succinate dehydrogenase (complex II, CII), ubiquinol-cytochrome c oxidoreductase (cytochrome b-c1 complex, complex III, CIII) and cytochrome c oxidase (complex IV, CIV), that cooperate to transfer electrons derived from NADH and succinate to molecular oxygen, creating an electrochemical gradient over the inner membrane that drives transmembrane transport and the ATP synthase. Cytochrome c oxidase is the component of the respiratory chain that catalyzes the reduction of oxygen to water. Electrons originating from reduced cytochrome c in the intermembrane space (IMS) are transferred via the dinuclear copper A center (CU(A)) of subunit 2 and heme A of subunit 1 to the active site in subunit 1, a binuclear center (BNC) formed by heme A3 and copper B (CU(B)). The BNC reduces molecular oxygen to 2 water molecules using 4 electrons from cytochrome c in the IMS and 4 protons from the mitochondrial matrix. The polypeptide is Cytochrome c oxidase subunit 2 (COII) (Lasius sp).